We begin with the raw amino-acid sequence, 393 residues long: S-adenosylmethionine synthase (393 aa).

An ATP-binding site is contributed by H16. Position 18 (D18) interacts with Mg(2+). A K(+)-binding site is contributed by E44. Residues E57 and Q100 each coordinate L-methionine. The segment at 100–110 (QSPDIVMGVDG) is flexible loop. Residues 165–167 (DAK), 231–232 (RF), D240, 246–247 (RK), and K267 contribute to the ATP site. D240 is a binding site for L-methionine. K271 provides a ligand contact to L-methionine.

Belongs to the AdoMet synthase family. In terms of assembly, homotetramer; dimer of dimers. Requires Mg(2+) as cofactor. The cofactor is K(+).

Its subcellular location is the cytoplasm. It carries out the reaction L-methionine + ATP + H2O = S-adenosyl-L-methionine + phosphate + diphosphate. It participates in amino-acid biosynthesis; S-adenosyl-L-methionine biosynthesis; S-adenosyl-L-methionine from L-methionine: step 1/1. Its function is as follows. Catalyzes the formation of S-adenosylmethionine (AdoMet) from methionine and ATP. The overall synthetic reaction is composed of two sequential steps, AdoMet formation and the subsequent tripolyphosphate hydrolysis which occurs prior to release of AdoMet from the enzyme. The sequence is that of S-adenosylmethionine synthase from Coxiella burnetii (strain Dugway 5J108-111).